Here is a 140-residue protein sequence, read N- to C-terminus: Small ribosomal subunit protein uS12 (140 aa).

A Hydroxyproline modification is found at Pro-59.

It belongs to the universal ribosomal protein uS12 family.

This Encephalitozoon cuniculi (strain GB-M1) (Microsporidian parasite) protein is Small ribosomal subunit protein uS12 (RPS23).